Here is a 460-residue protein sequence, read N- to C-terminus: NADH-ubiquinone oxidoreductase chain 4 (460 aa).

Transmembrane regions (helical) follow at residues 20–42, 61–81, 93–113, 114–134, 148–168, 195–215, 225–245, 258–278, 285–304, 309–331, 351–371, and 394–414; these read PKWLWSTTTAHGLLIALISLTWL, PLSTPLLGLTCWLLPLMVLAS, QRLYITLLASLQTFLIMAFGA, TEIIMFYIMFEATLIPTLIII, TYFLFYTLAGSLPLLVALLLL, IWWAGCLIAFLVKMPLYGVHL, PVAGSMVLAAVLLKLGGYGMM, LAYPFIILALWGIIMTGSICL, SLIAYSSVSHMGLVAGGILI, GFTGAIILMIAHGLVSSALFCLA, MIFPLTAVWWFIANLANLALP, and IILTGTGTLITAGYSLYLFLM.

Belongs to the complex I subunit 4 family.

It is found in the mitochondrion membrane. It catalyses the reaction a ubiquinone + NADH + 5 H(+)(in) = a ubiquinol + NAD(+) + 4 H(+)(out). In terms of biological role, core subunit of the mitochondrial membrane respiratory chain NADH dehydrogenase (Complex I) that is believed to belong to the minimal assembly required for catalysis. Complex I functions in the transfer of electrons from NADH to the respiratory chain. The immediate electron acceptor for the enzyme is believed to be ubiquinone. In Formosania lacustris (Oriental stream loach), this protein is NADH-ubiquinone oxidoreductase chain 4 (MT-ND4).